A 255-amino-acid polypeptide reads, in one-letter code: Acetylglutamate kinase (255 aa).

Substrate-binding positions include 40–41, Arg62, and Asn157; that span reads GG.

This sequence belongs to the acetylglutamate kinase family. ArgB subfamily.

It is found in the cytoplasm. It catalyses the reaction N-acetyl-L-glutamate + ATP = N-acetyl-L-glutamyl 5-phosphate + ADP. It functions in the pathway amino-acid biosynthesis; L-arginine biosynthesis; N(2)-acetyl-L-ornithine from L-glutamate: step 2/4. In terms of biological role, catalyzes the ATP-dependent phosphorylation of N-acetyl-L-glutamate. The sequence is that of Acetylglutamate kinase from Parabacteroides distasonis (strain ATCC 8503 / DSM 20701 / CIP 104284 / JCM 5825 / NCTC 11152).